The following is a 374-amino-acid chain: MRYLITGGGTGGHIYPALSIARALTEQDPEAELLYVGTRTGREAAIVPQAGIAFAVISSGGVVNLGLLQRVRGGLRAARGLLEALGHIRRFRPDIVIGTGGFVAGPVLAAARLARVPLVIQEQNAFPGVTNRLAARWATAVFVPYEEARAHFPPGVRLIRAGNPVRPEIASASREAGRQALGLSERDRVLVIMGGSGGARDFNRVAAEAVLQLDVPGLRVVHITGERYFGQVKAQYGDRAPHVTLLPYAHNMPEVYAAADAGLFRAGALTLAEIQVRRLPSVLIPSPNVTHNHQEWNARTLERRGAAIVLREGGLTPADLAAALTRLLTDEALADRMRAALGEVADPDAARTIARRIVGIARQSREAREARRGR.

Residues 10 to 12 (TGG), N124, R166, S196, and Q294 contribute to the UDP-N-acetyl-alpha-D-glucosamine site.

This sequence belongs to the glycosyltransferase 28 family. MurG subfamily.

The protein localises to the cell membrane. The catalysed reaction is di-trans,octa-cis-undecaprenyl diphospho-N-acetyl-alpha-D-muramoyl-L-alanyl-D-glutamyl-meso-2,6-diaminopimeloyl-D-alanyl-D-alanine + UDP-N-acetyl-alpha-D-glucosamine = di-trans,octa-cis-undecaprenyl diphospho-[N-acetyl-alpha-D-glucosaminyl-(1-&gt;4)]-N-acetyl-alpha-D-muramoyl-L-alanyl-D-glutamyl-meso-2,6-diaminopimeloyl-D-alanyl-D-alanine + UDP + H(+). Its pathway is cell wall biogenesis; peptidoglycan biosynthesis. In terms of biological role, cell wall formation. Catalyzes the transfer of a GlcNAc subunit on undecaprenyl-pyrophosphoryl-MurNAc-pentapeptide (lipid intermediate I) to form undecaprenyl-pyrophosphoryl-MurNAc-(pentapeptide)GlcNAc (lipid intermediate II). The chain is UDP-N-acetylglucosamine--N-acetylmuramyl-(pentapeptide) pyrophosphoryl-undecaprenol N-acetylglucosamine transferase from Symbiobacterium thermophilum (strain DSM 24528 / JCM 14929 / IAM 14863 / T).